A 73-amino-acid chain; its full sequence is Translation initiation factor IF-1 1 (73 aa).

The S1-like domain occupies 1 to 72; it reads MAKEELIEFG…TKGRINFRHK (72 aa).

It belongs to the IF-1 family. Component of the 30S ribosomal translation pre-initiation complex which assembles on the 30S ribosome in the order IF-2 and IF-3, IF-1 and N-formylmethionyl-tRNA(fMet); mRNA recruitment can occur at any time during PIC assembly.

The protein localises to the cytoplasm. In terms of biological role, one of the essential components for the initiation of protein synthesis. Stabilizes the binding of IF-2 and IF-3 on the 30S subunit to which N-formylmethionyl-tRNA(fMet) subsequently binds. Helps modulate mRNA selection, yielding the 30S pre-initiation complex (PIC). Upon addition of the 50S ribosomal subunit IF-1, IF-2 and IF-3 are released leaving the mature 70S translation initiation complex. This Cupriavidus metallidurans (strain ATCC 43123 / DSM 2839 / NBRC 102507 / CH34) (Ralstonia metallidurans) protein is Translation initiation factor IF-1 1.